The chain runs to 320 residues: L-lactate dehydrogenase (320 aa).

Residues Val18, Asp39, Arg44, Tyr69, and 83 to 84 (GA) each bind NAD(+). Residues Gln86 and Arg92 each contribute to the substrate site. NAD(+) contacts are provided by residues Thr105, 122-124 (AAN), and Ser147. Substrate is bound at residue 124–127 (NPVD). 152 to 155 (DSAR) is a substrate binding site. The active-site Proton acceptor is the His179. Phosphotyrosine is present on Tyr223. Thr232 is a binding site for substrate.

This sequence belongs to the LDH/MDH superfamily. LDH family. In terms of assembly, homotetramer.

Its subcellular location is the cytoplasm. It catalyses the reaction (S)-lactate + NAD(+) = pyruvate + NADH + H(+). It participates in fermentation; pyruvate fermentation to lactate; (S)-lactate from pyruvate: step 1/1. Functionally, catalyzes the conversion of lactate to pyruvate. The protein is L-lactate dehydrogenase of Pediococcus pentosaceus (strain ATCC 25745 / CCUG 21536 / LMG 10740 / 183-1w).